We begin with the raw amino-acid sequence, 298 residues long: Acetylglutamate kinase (298 aa).

Residues 68-69 (GG), arginine 90, and asparagine 195 each bind substrate.

The protein belongs to the acetylglutamate kinase family. ArgB subfamily.

The protein localises to the cytoplasm. It catalyses the reaction N-acetyl-L-glutamate + ATP = N-acetyl-L-glutamyl 5-phosphate + ADP. Its pathway is amino-acid biosynthesis; L-arginine biosynthesis; N(2)-acetyl-L-ornithine from L-glutamate: step 2/4. Functionally, catalyzes the ATP-dependent phosphorylation of N-acetyl-L-glutamate. In Hydrogenovibrio crunogenus (strain DSM 25203 / XCL-2) (Thiomicrospira crunogena), this protein is Acetylglutamate kinase.